A 419-amino-acid polypeptide reads, in one-letter code: Mitogen-activated protein kinase pmk-2 (419 aa).

One can recognise a Protein kinase domain in the interval 49 to 350 (YNSLKPLGEG…VSSALRHDYL (302 aa)). ATP contacts are provided by residues 55-63 (LGEGAYGVV) and K78. D210 (proton acceptor) is an active-site residue. T222 carries the post-translational modification Phosphothreonine. The TXY motif lies at 222 to 224 (TGY). Y224 carries the post-translational modification Phosphotyrosine.

It belongs to the protein kinase superfamily. CMGC Ser/Thr protein kinase family. MAP kinase subfamily. The cofactor is Mg(2+). Post-translationally, dually phosphorylated on Thr-222 and Tyr-224, which activates the enzyme.

The protein resides in the cytoplasm. The enzyme catalyses L-seryl-[protein] + ATP = O-phospho-L-seryl-[protein] + ADP + H(+). It catalyses the reaction L-threonyl-[protein] + ATP = O-phospho-L-threonyl-[protein] + ADP + H(+). Its activity is regulated as follows. Activated by phosphorylation on threonine and tyrosine. Inhibited by pyridinyl-imidazole related compounds. Its function is as follows. Responds to activation by environmental stress and pro-inflammatory cytokines by phosphorylating downstream targets. This is Mitogen-activated protein kinase pmk-2 (pmk-2) from Caenorhabditis elegans.